A 150-amino-acid polypeptide reads, in one-letter code: 16 kDa phloem protein 1 (150 aa).

A C2 domain is found at 1 to 108 (MGMGMMEVHL…LAEGVRKGKS (108 aa)). Asp-20, Asp-27, Asp-78, Asp-80, and Asp-86 together coordinate Ca(2+).

It depends on Ca(2+) as a cofactor. In terms of tissue distribution, sieve elements of leaves, stems, roots and flowers.

In terms of biological role, binds to both sense and antisense RNA. Interacts with mesophyll plasmodesmata to mediate its own cell-to-cell transport and potentiate RNA trafficking. The chain is 16 kDa phloem protein 1 (PP16-1) from Cucurbita maxima (Pumpkin).